Here is a 379-residue protein sequence, read N- to C-terminus: LIM/homeobox protein Lhx9 (379 aa).

2 consecutive LIM zinc-binding domains span residues 51-112 and 113-175; these read TLCA…RFSV and QRCA…LVQG. Disordered stretches follow at residues 232 to 257 and 310 to 379; these read ENDT…TSFK and RQEN…TNLF. Residues 248–257 are compositionally biased toward basic residues; that stretch reads KTKRMRTSFK. The homeobox DNA-binding region spans 249–308; that stretch reads TKRMRTSFKHHQLRTTKSYFAINHNPDAKDLKQLAQKTGLTKRVLQVWFQNARAKFRRNL. Residues 326–379 are compositionally biased toward polar residues; it reads APASTDSAALTPTGAASTLSDLTSPSLNVGASVTPNMDSHESGSPSQTTLTNLF.

As to expression, isoform 1 and isoform 3 are expressed in ovary, testis, brain and heart. Isoform 4 and isoform 5 are expressed in brain.

The protein localises to the nucleus. Its function is as follows. May be involved in gonadal development. This chain is LIM/homeobox protein Lhx9 (lhx9), found in Glandirana rugosa (Japanese wrinkled frog).